We begin with the raw amino-acid sequence, 441 residues long: GTPase Der (441 aa).

EngA-type G domains lie at 4 to 168 (PVVA…PEDI) and 177 to 352 (IRIA…EQNS). GTP contacts are provided by residues 10–17 (GRPNVGKS), 57–61 (DTGGI), 121–124 (NKVE), 183–190 (GRPNVGKS), 230–234 (DTAGM), and 295–298 (NKWD). The 85-residue stretch at 353 to 437 (TRVATATLNT…PIRMIVRQKD (85 aa)) folds into the KH-like domain.

The protein belongs to the TRAFAC class TrmE-Era-EngA-EngB-Septin-like GTPase superfamily. EngA (Der) GTPase family. As to quaternary structure, associates with the 50S ribosomal subunit.

In terms of biological role, GTPase that plays an essential role in the late steps of ribosome biogenesis. The sequence is that of GTPase Der from Desulfitobacterium hafniense (strain Y51).